We begin with the raw amino-acid sequence, 115 residues long: uncharacterized protein (115 aa).

Positions 1 to 20 (MKTFFRTVLFGSLMAVCANS) are cleaved as a signal peptide.

This is an uncharacterized protein from Escherichia coli O6:H1 (strain CFT073 / ATCC 700928 / UPEC).